The sequence spans 296 residues: Large ribosomal subunit protein uL15m (296 aa).

The transit peptide at Met1 to Arg21 directs the protein to the mitochondrion. A disordered region spans residues Val22 to Gly66. Residues Pro36 to Gly52 show a composition bias toward basic residues.

This sequence belongs to the universal ribosomal protein uL15 family. In terms of assembly, component of the mitochondrial large ribosomal subunit (mt-LSU). Mature mammalian 55S mitochondrial ribosomes consist of a small (28S) and a large (39S) subunit. The 28S small subunit contains a 12S ribosomal RNA (12S mt-rRNA) and 30 different proteins. The 39S large subunit contains a 16S rRNA (16S mt-rRNA), a copy of mitochondrial valine transfer RNA (mt-tRNA(Val)), which plays an integral structural role, and 52 different proteins.

It localises to the mitochondrion. The sequence is that of Large ribosomal subunit protein uL15m (MRPL15) from Homo sapiens (Human).